A 142-amino-acid chain; its full sequence is Peptide methionine sulfoxide reductase MsrB (142 aa).

The 124-residue stretch at 3 to 126 (KEELKKKLSP…NSAALRFIPF (124 aa)) folds into the MsrB domain. C115 functions as the Nucleophile in the catalytic mechanism.

The protein belongs to the MsrB Met sulfoxide reductase family.

It catalyses the reaction L-methionyl-[protein] + [thioredoxin]-disulfide + H2O = L-methionyl-(R)-S-oxide-[protein] + [thioredoxin]-dithiol. This chain is Peptide methionine sulfoxide reductase MsrB, found in Lactococcus lactis subsp. cremoris (strain MG1363).